We begin with the raw amino-acid sequence, 340 residues long: Protein arginine N-methyltransferase 1 (340 aa).

One can recognise an SAM-dependent MTase PRMT-type domain in the interval Lys-16 to Arg-311. Tyr-19 carries the post-translational modification Phosphotyrosine. 5 residues coordinate S-adenosyl-L-methionine: His-29, Arg-38, Gly-62, Asp-84, and Glu-113. Catalysis depends on residues Glu-128 and Glu-137. Ser-176 carries the phosphoserine modification.

Belongs to the class I-like SAM-binding methyltransferase superfamily. Protein arginine N-methyltransferase family. Interacts with pab2.

It is found in the nucleus. The enzyme catalyses L-arginyl-[protein] + S-adenosyl-L-methionine = N(omega)-methyl-L-arginyl-[protein] + S-adenosyl-L-homocysteine + H(+). The catalysed reaction is L-arginyl-[protein] + 2 S-adenosyl-L-methionine = N(omega),N(omega)-dimethyl-L-arginyl-[protein] + 2 S-adenosyl-L-homocysteine + 2 H(+). Functionally, S-adenosyl-L-methionine-dependent protein-arginine N-methyltransferase that catalyzes both the mono- and asymmetric (type I) dimethylation of the guanidino nitrogens of arginine residues in target proteins. Asymmetrically dimethylates the polyadenylate-binding protein pab2, modulating pab2 oligomerization. In Schizosaccharomyces pombe (strain 972 / ATCC 24843) (Fission yeast), this protein is Protein arginine N-methyltransferase 1.